The primary structure comprises 283 residues: Polyamine aminopropyltransferase (283 aa).

In terms of domain architecture, PABS spans 3-236 (GIWFSELQTP…GLWAFSLGSK (234 aa)). S-methyl-5'-thioadenosine is bound at residue glutamine 32. Residues histidine 63 and aspartate 87 each coordinate spermidine. Residues glutamate 107 and 138-139 (DG) contribute to the S-methyl-5'-thioadenosine site. The active-site Proton acceptor is aspartate 156. 156 to 159 (DSTD) serves as a coordination point for spermidine. Residue proline 163 coordinates S-methyl-5'-thioadenosine.

It belongs to the spermidine/spermine synthase family. As to quaternary structure, homodimer or homotetramer.

The protein localises to the cytoplasm. The enzyme catalyses S-adenosyl 3-(methylsulfanyl)propylamine + putrescine = S-methyl-5'-thioadenosine + spermidine + H(+). It functions in the pathway amine and polyamine biosynthesis; spermidine biosynthesis; spermidine from putrescine: step 1/1. Catalyzes the irreversible transfer of a propylamine group from the amino donor S-adenosylmethioninamine (decarboxy-AdoMet) to putrescine (1,4-diaminobutane) to yield spermidine. The protein is Polyamine aminopropyltransferase of Moorella thermoacetica (strain ATCC 39073 / JCM 9320).